We begin with the raw amino-acid sequence, 293 residues long: Cyclohexadienyl dehydrogenase (293 aa).

The 289-residue stretch at 5–293 (KHIAIIGLGL…ALKTDHDIRP (289 aa)) folds into the Prephenate/arogenate dehydrogenase domain. 6 to 30 (HIAIIGLGLIGSSAARATKAYCPDV) contacts NAD(+).

Belongs to the prephenate/arogenate dehydrogenase family. Homodimer.

It catalyses the reaction L-arogenate + NAD(+) = L-tyrosine + CO2 + NADH. It carries out the reaction prephenate + NAD(+) = 3-(4-hydroxyphenyl)pyruvate + CO2 + NADH. Its pathway is amino-acid biosynthesis; L-tyrosine biosynthesis; (4-hydroxyphenyl)pyruvate from prephenate (NAD(+) route): step 1/1. It functions in the pathway amino-acid biosynthesis; L-tyrosine biosynthesis; L-tyrosine from L-arogenate (NAD(+) route): step 1/1. Its activity is regulated as follows. Insensitive to feedback inhibition by L-tyrosine. In terms of biological role, can function as either prephenate dehydrogenase or as arogenate dehydrogenase in the biosynthesis of L-tyrosine. Catalyzes two analogous reactions: converts prephenate to 4-hydroxyphenylpyruvate and transforms L-arogenate to L-tyrosine. Is not able to utilize NADP(+) instead of NAD(+) as cosubstrate. This Zymomonas mobilis subsp. mobilis (strain ATCC 31821 / ZM4 / CP4) protein is Cyclohexadienyl dehydrogenase.